A 451-amino-acid chain; its full sequence is Tryptophan--tRNA ligase (451 aa).

Residues Thr10 to Thr12 and Gly18 to Asn19 contribute to the ATP site. Residues Thr11–Asn19 carry the 'HIGH' region motif. Asp143 provides a ligand contact to L-tryptophan. ATP is bound by residues Gly155–Asp157, Leu195, and Lys202–Ser206. The short motif at Lys202–Ser206 is the 'KMSKS' region element.

The protein belongs to the class-I aminoacyl-tRNA synthetase family. As to quaternary structure, homodimer.

It localises to the cytoplasm. It catalyses the reaction tRNA(Trp) + L-tryptophan + ATP = L-tryptophyl-tRNA(Trp) + AMP + diphosphate + H(+). Functionally, catalyzes the attachment of tryptophan to tRNA(Trp). In Bordetella pertussis (strain Tohama I / ATCC BAA-589 / NCTC 13251), this protein is Tryptophan--tRNA ligase.